The chain runs to 458 residues: V-type ATP synthase beta chain (458 aa).

Belongs to the ATPase alpha/beta chains family.

Produces ATP from ADP in the presence of a proton gradient across the membrane. The V-type beta chain is a regulatory subunit. In Enterococcus faecalis (strain ATCC 700802 / V583), this protein is V-type ATP synthase beta chain.